Reading from the N-terminus, the 961-residue chain is Glycine dehydrogenase (decarboxylating) (961 aa).

The residue at position 709 (lysine 709) is an N6-(pyridoxal phosphate)lysine.

This sequence belongs to the GcvP family. The glycine cleavage system is composed of four proteins: P, T, L and H. Pyridoxal 5'-phosphate serves as cofactor.

It catalyses the reaction N(6)-[(R)-lipoyl]-L-lysyl-[glycine-cleavage complex H protein] + glycine + H(+) = N(6)-[(R)-S(8)-aminomethyldihydrolipoyl]-L-lysyl-[glycine-cleavage complex H protein] + CO2. Functionally, the glycine cleavage system catalyzes the degradation of glycine. The P protein binds the alpha-amino group of glycine through its pyridoxal phosphate cofactor; CO(2) is released and the remaining methylamine moiety is then transferred to the lipoamide cofactor of the H protein. The polypeptide is Glycine dehydrogenase (decarboxylating) (Streptomyces avermitilis (strain ATCC 31267 / DSM 46492 / JCM 5070 / NBRC 14893 / NCIMB 12804 / NRRL 8165 / MA-4680)).